The primary structure comprises 298 residues: Small ribosomal subunit biogenesis GTPase RsgA 1 (298 aa).

Residues 63 to 224 form the CP-type G domain; it reads QTQLVRPPVA…VADTPGFSSY (162 aa). GTP-binding positions include 112-115 and 167-175; these read AKTD and GQTGAGKST. Cys-248, Cys-253, His-255, and Cys-261 together coordinate Zn(2+).

This sequence belongs to the TRAFAC class YlqF/YawG GTPase family. RsgA subfamily. As to quaternary structure, monomer. Associates with 30S ribosomal subunit, binds 16S rRNA. Zn(2+) serves as cofactor.

It localises to the cytoplasm. In terms of biological role, one of several proteins that assist in the late maturation steps of the functional core of the 30S ribosomal subunit. Helps release RbfA from mature subunits. May play a role in the assembly of ribosomal proteins into the subunit. Circularly permuted GTPase that catalyzes slow GTP hydrolysis, GTPase activity is stimulated by the 30S ribosomal subunit. In Lactiplantibacillus plantarum (strain ATCC BAA-793 / NCIMB 8826 / WCFS1) (Lactobacillus plantarum), this protein is Small ribosomal subunit biogenesis GTPase RsgA 1.